A 479-amino-acid chain; its full sequence is Ribosomal RNA small subunit methyltransferase F (479 aa).

Residues 125–131, glutamate 149, aspartate 176, and aspartate 194 each bind S-adenosyl-L-methionine; that span reads AAAPGSK. Cysteine 247 functions as the Nucleophile in the catalytic mechanism.

This sequence belongs to the class I-like SAM-binding methyltransferase superfamily. RsmB/NOP family.

It is found in the cytoplasm. It catalyses the reaction cytidine(1407) in 16S rRNA + S-adenosyl-L-methionine = 5-methylcytidine(1407) in 16S rRNA + S-adenosyl-L-homocysteine + H(+). Specifically methylates the cytosine at position 1407 (m5C1407) of 16S rRNA. This chain is Ribosomal RNA small subunit methyltransferase F (rsmF), found in Escherichia coli (strain K12).